The chain runs to 380 residues: Zinc finger protein neuro-d4 (380 aa).

A disordered region spans residues 132 to 164; the sequence is ALLDCQKPPPGDFAHDAEGDEMEDDAPRRKNKA. The segment at 190-213 adopts a C2H2-type zinc-finger fold; the sequence is YVCDICGKRYKNRPGLSYHYTHTH. PHD-type zinc fingers lie at residues 262–321 and 318–368; these read EGPC…CKNC and CKNC…CLRQ. Residues Cys-265, Cys-268, Cys-286, Cys-289, His-294, Cys-297, Cys-315, Cys-318, Cys-321, Cys-324, Cys-336, Cys-339, His-344, Cys-347, Cys-362, and Cys-365 each contribute to the Zn(2+) site.

The protein belongs to the requiem/DPF family. Component of neuron-specific chromatin remodeling complex (nBAF complex), a subfamily of ATP-dependent SWI/SNF chromatin remodeling complexes.

It localises to the cytoplasm. The protein resides in the nucleus. Its function is as follows. May have an important role in developing neurons by participating in regulation of cell survival, possibly as a neurospecific transcription factor. Belongs to the neuron-specific chromatin remodeling complex (nBAF complex) and plays a role in neural development. In Gallus gallus (Chicken), this protein is Zinc finger protein neuro-d4.